Consider the following 63-residue polypeptide: Hyphancin-3D (63 aa).

The signal sequence occupies residues 1–22; that stretch reads MNFSRIIFLVFACFVALASVSA. The propeptide at 23 to 26 is removed by a dipeptidylpeptidase; it reads APEP. The residue at position 61 (L61) is a Leucine amide.

Belongs to the cecropin family.

The protein localises to the secreted. Has antibacterial activity. The sequence is that of Hyphancin-3D from Hyphantria cunea (Fall webworm moth).